The primary structure comprises 189 residues: Hypoxanthine/guanine phosphoribosyltransferase (189 aa).

The protein belongs to the purine/pyrimidine phosphoribosyltransferase family. Archaeal HPRT subfamily. Homodimer.

It is found in the cytoplasm. It catalyses the reaction IMP + diphosphate = hypoxanthine + 5-phospho-alpha-D-ribose 1-diphosphate. The catalysed reaction is GMP + diphosphate = guanine + 5-phospho-alpha-D-ribose 1-diphosphate. It functions in the pathway purine metabolism; IMP biosynthesis via salvage pathway; IMP from hypoxanthine: step 1/1. Functionally, catalyzes a salvage reaction resulting in the formation of IMP that is energically less costly than de novo synthesis. This Methanothrix soehngenii (strain ATCC 5969 / DSM 3671 / JCM 10134 / NBRC 103675 / OCM 69 / GP-6) (Methanosaeta concilii) protein is Hypoxanthine/guanine phosphoribosyltransferase.